We begin with the raw amino-acid sequence, 244 residues long: Large ribosomal subunit protein uL30A (244 aa).

The segment at 1 to 26 (MAAEKILTPESQLKKSKAQQKTAEQV) is disordered.

It belongs to the universal ribosomal protein uL30 family. In terms of assembly, component of the large ribosomal subunit (LSU). Mature yeast ribosomes consist of a small (40S) and a large (60S) subunit. The 40S small subunit contains 1 molecule of ribosomal RNA (18S rRNA) and 33 different proteins (encoded by 57 genes). The large 60S subunit contains 3 rRNA molecules (25S, 5.8S and 5S rRNA) and 46 different proteins (encoded by 81 genes).

Its subcellular location is the cytoplasm. In terms of biological role, component of the ribosome, a large ribonucleoprotein complex responsible for the synthesis of proteins in the cell. The small ribosomal subunit (SSU) binds messenger RNAs (mRNAs) and translates the encoded message by selecting cognate aminoacyl-transfer RNA (tRNA) molecules. The large subunit (LSU) contains the ribosomal catalytic site termed the peptidyl transferase center (PTC), which catalyzes the formation of peptide bonds, thereby polymerizing the amino acids delivered by tRNAs into a polypeptide chain. The nascent polypeptides leave the ribosome through a tunnel in the LSU and interact with protein factors that function in enzymatic processing, targeting, and the membrane insertion of nascent chains at the exit of the ribosomal tunnel. This chain is Large ribosomal subunit protein uL30A, found in Saccharomyces cerevisiae (strain ATCC 204508 / S288c) (Baker's yeast).